The sequence spans 43 residues: DRDSCVDKSKCSKYGYYGQCDKCCKKAGDRAGNCVYFKCKCNQ.

4 cysteine pairs are disulfide-bonded: Cys5–Cys23, Cys11–Cys34, Cys20–Cys39, and Cys24–Cys41.

This sequence belongs to the ergtoxin family. Gamma-KTx 4 subfamily. In terms of tissue distribution, expressed by the venom gland.

It is found in the secreted. Functionally, reversibly blocks Kv11/ERG potassium channels. The chain is Potassium channel toxin gamma-KTx 4.6 from Centruroides limpidus (Mexican scorpion).